Here is a 106-residue protein sequence, read N- to C-terminus: MVHTPYHSDFVTVCWFLYLIRTADNRLYTGITTDVPRRFRQHQAGKGAKALRGKGDLQLAFSHEVGEHSLALRLEYRVKQLTKREKERLVAGEDAFETLLARLKDD.

The region spanning 13–88 is the GIY-YIG domain; the sequence is VCWFLYLIRT…KQLTKREKER (76 aa).

It belongs to the UPF0213 family.

In Klebsiella pneumoniae subsp. pneumoniae (strain ATCC 700721 / MGH 78578), this protein is UPF0213 protein KPN78578_35340.